The sequence spans 408 residues: Argininosuccinate synthase (408 aa).

ATP is bound by residues 12 to 20 and alanine 39; that span reads AYSGGLDTS. Positions 92 and 97 each coordinate L-citrulline. Glycine 122 contacts ATP. Positions 124, 128, and 129 each coordinate L-aspartate. Asparagine 128 provides a ligand contact to L-citrulline. L-citrulline is bound by residues arginine 132, serine 183, serine 192, glutamate 268, and tyrosine 280.

The protein belongs to the argininosuccinate synthase family. Type 1 subfamily. As to quaternary structure, homotetramer.

Its subcellular location is the cytoplasm. It carries out the reaction L-citrulline + L-aspartate + ATP = 2-(N(omega)-L-arginino)succinate + AMP + diphosphate + H(+). The protein operates within amino-acid biosynthesis; L-arginine biosynthesis; L-arginine from L-ornithine and carbamoyl phosphate: step 2/3. The chain is Argininosuccinate synthase from Caulobacter vibrioides (strain ATCC 19089 / CIP 103742 / CB 15) (Caulobacter crescentus).